Consider the following 623-residue polypeptide: Glutathione import ATP-binding protein GsiA (623 aa).

ABC transporter domains follow at residues 15–269 and 325–564; these read VSGL…QTLL and LRSG…RKLM. Residues 49–56 and 357–364 each bind ATP; these read GESGSGKS.

The protein belongs to the ABC transporter superfamily. Glutathione importer (TC 3.A.1.5.11) family. As to quaternary structure, the complex is composed of two ATP-binding proteins (GsiA), two transmembrane proteins (GsiC and GsiD) and a solute-binding protein (GsiB).

It localises to the cell inner membrane. It catalyses the reaction glutathione(out) + ATP + H2O = glutathione(in) + ADP + phosphate + H(+). Part of the ABC transporter complex GsiABCD involved in glutathione import. Responsible for energy coupling to the transport system. This chain is Glutathione import ATP-binding protein GsiA, found in Salmonella typhimurium (strain LT2 / SGSC1412 / ATCC 700720).